The chain runs to 873 residues: Actin-related protein 8 (873 aa).

Residues 108-129 (DEQVKPTSSTSSTSTTEEVEIK) form a disordered region. Over residues 114-123 (TSSTSSTSTT) the composition is skewed to low complexity. 368-371 (DLGH) serves as a coordination point for ATP. Over residues 596–650 (NNNNNNNNSSSSSNNNNNNNNSGSNSNINSYNNNNNNNNNNNNNNNNNNNNSFNN) the composition is skewed to low complexity. Residues 596–701 (NNNNNNNNSS…TSSPTKKLKI (106 aa)) are disordered. A compositionally biased stretch (polar residues) spans 651 to 668 (VTIVTSTLNSNSTVPSTL). Over residues 669 to 696 (NSNSTVPSISNSNSTVPSTSTSTTSSPT) the composition is skewed to low complexity. A coiled-coil region spans residues 762–804 (FKQLEQQYQAQQLQFQQQLQQQQQQQQQLQQQLQNSTNSATTT).

It belongs to the actin family. ARP8 subfamily. As to quaternary structure, component of the chromatin remodeling INO80 complex. Exists as monomers and dimers, but the dimer is most probably the biologically relevant form required for stable interactions with histones that exploits the twofold symmetry of the nucleosome core.

The protein resides in the nucleus. The protein localises to the cytoplasm. It is found in the cytoskeleton. Plays an important role in the functional organization of mitotic chromosomes. Exhibits low basal ATPase activity, and unable to polymerize. Its function is as follows. Proposed core component of the chromatin remodeling INO80 complex which is involved in transcriptional regulation, DNA replication and probably DNA repair. Strongly prefer nucleosomes and H3-H4 tetramers over H2A-H2B dimers, suggesting it may act as a nucleosome recognition module within the complex. The polypeptide is Actin-related protein 8 (Dictyostelium discoideum (Social amoeba)).